A 512-amino-acid chain; its full sequence is Maturase K (512 aa).

The protein belongs to the intron maturase 2 family. MatK subfamily.

It localises to the plastid. The protein localises to the chloroplast. Usually encoded in the trnK tRNA gene intron. Probably assists in splicing its own and other chloroplast group II introns. This Zantedeschia aethiopica (White calla lily) protein is Maturase K.